The primary structure comprises 158 residues: Protein OPG060 (158 aa).

Belongs to the orthopoxvirus OPG058 family.

In Homo sapiens (Human), this protein is Protein OPG060 (OPG060).